Consider the following 208-residue polypeptide: V-type ATP synthase subunit E (208 aa).

It belongs to the V-ATPase E subunit family.

Its function is as follows. Produces ATP from ADP in the presence of a proton gradient across the membrane. This is V-type ATP synthase subunit E (atpE) from Chlamydia muridarum (strain MoPn / Nigg).